A 943-amino-acid chain; its full sequence is UvrABC system protein A (943 aa).

ATP is bound at residue G31–S38. Residues C253–C280 form a C4-type zinc finger. ABC transporter domains are found at residues W310–I587 and L607–K937. Residue G640–S647 participates in ATP binding. The C4-type zinc-finger motif lies at C740–C766.

This sequence belongs to the ABC transporter superfamily. UvrA family. Forms a heterotetramer with UvrB during the search for lesions.

It is found in the cytoplasm. Functionally, the UvrABC repair system catalyzes the recognition and processing of DNA lesions. UvrA is an ATPase and a DNA-binding protein. A damage recognition complex composed of 2 UvrA and 2 UvrB subunits scans DNA for abnormalities. When the presence of a lesion has been verified by UvrB, the UvrA molecules dissociate. The sequence is that of UvrABC system protein A from Pasteurella multocida (strain Pm70).